Here is a 296-residue protein sequence, read N- to C-terminus: Acetylglutamate kinase (296 aa).

Substrate contacts are provided by residues 67–68, Arg89, and Asn194; that span reads GG.

This sequence belongs to the acetylglutamate kinase family. ArgB subfamily.

The protein resides in the cytoplasm. The enzyme catalyses N-acetyl-L-glutamate + ATP = N-acetyl-L-glutamyl 5-phosphate + ADP. Its pathway is amino-acid biosynthesis; L-arginine biosynthesis; N(2)-acetyl-L-ornithine from L-glutamate: step 2/4. Catalyzes the ATP-dependent phosphorylation of N-acetyl-L-glutamate. In Brucella anthropi (strain ATCC 49188 / DSM 6882 / CCUG 24695 / JCM 21032 / LMG 3331 / NBRC 15819 / NCTC 12168 / Alc 37) (Ochrobactrum anthropi), this protein is Acetylglutamate kinase.